A 718-amino-acid chain; its full sequence is GMP synthase [glutamine-hydrolyzing] (718 aa).

The region spanning 43 to 247 (VIVILDAGSQ…LIDICGCSAN (205 aa)) is the Glutamine amidotransferase type-1 domain. Residues cysteine 128, histidine 221, and glutamate 223 each act as for GATase activity in the active site. Residues 248–457 (YTLDDREQQA…LGLSDSLVWR (210 aa)) form the GMPS ATP-PPase domain. 275 to 281 (SGGVDST) contacts ATP.

Homodimer.

It catalyses the reaction XMP + L-glutamine + ATP + H2O = GMP + L-glutamate + AMP + diphosphate + 2 H(+). It functions in the pathway purine metabolism; GMP biosynthesis; GMP from XMP (L-Gln route): step 1/1. The chain is GMP synthase [glutamine-hydrolyzing] (guaA) from Dictyostelium discoideum (Social amoeba).